The following is a 437-amino-acid chain: Pterin deaminase (437 aa).

2 residues coordinate a divalent metal cation: His80 and His82. Lys85 serves as a coordination point for substrate. His231 contacts a divalent metal cation. Glu234 serves as the catalytic Proton donor. Asp331 serves as a coordination point for a divalent metal cation. 331–332 serves as a coordination point for substrate; that stretch reads DN.

This sequence belongs to the metallo-dependent hydrolases superfamily. Pterin deaminase family. A divalent metal cation serves as cofactor.

It carries out the reaction a 2-amino-4-hydroxypteridine + H2O + H(+) = a 2,4-dihydroxypteridine + NH4(+). The catalysed reaction is L-sepiapterin + H2O + H(+) = (S)-xanthopterin-B2 + NH4(+). Its function is as follows. Catalyzes the deamination of many pterin metabolites, such as formylpterin, pterin-6-carboxylate, pterin-7-carboxylate, pterin, hydroxymethylpterin, biopterin, D-(+)-neopterin, isoxanthopterin, sepiapterin, folate, xanthopterin, and 7,8-dihydrohydroxymethylpterin. May be involved in a degradative pathway for catabolizing pterin rings. The chain is Pterin deaminase from Rhizobium rhizogenes (strain K84 / ATCC BAA-868) (Agrobacterium radiobacter).